Reading from the N-terminus, the 155-residue chain is Small ribosomal subunit protein uS7cz/uS7cy (155 aa).

This sequence belongs to the universal ribosomal protein uS7 family. As to quaternary structure, part of the 30S ribosomal subunit.

The protein localises to the plastid. It localises to the chloroplast. In terms of biological role, one of the primary rRNA binding proteins, it binds directly to 16S rRNA where it nucleates assembly of the head domain of the 30S subunit. The chain is Small ribosomal subunit protein uS7cz/uS7cy (rps7-A) from Oenothera argillicola (Appalachian evening primrose).